The chain runs to 180 residues: ATP synthase subunit delta (180 aa).

The protein belongs to the ATPase delta chain family. F-type ATPases have 2 components, F(1) - the catalytic core - and F(0) - the membrane proton channel. F(1) has five subunits: alpha(3), beta(3), gamma(1), delta(1), epsilon(1). F(0) has three main subunits: a(1), b(2) and c(10-14). The alpha and beta chains form an alternating ring which encloses part of the gamma chain. F(1) is attached to F(0) by a central stalk formed by the gamma and epsilon chains, while a peripheral stalk is formed by the delta and b chains.

The protein resides in the cell inner membrane. In terms of biological role, f(1)F(0) ATP synthase produces ATP from ADP in the presence of a proton or sodium gradient. F-type ATPases consist of two structural domains, F(1) containing the extramembraneous catalytic core and F(0) containing the membrane proton channel, linked together by a central stalk and a peripheral stalk. During catalysis, ATP synthesis in the catalytic domain of F(1) is coupled via a rotary mechanism of the central stalk subunits to proton translocation. Its function is as follows. This protein is part of the stalk that links CF(0) to CF(1). It either transmits conformational changes from CF(0) to CF(1) or is implicated in proton conduction. The polypeptide is ATP synthase subunit delta (Cupriavidus metallidurans (strain ATCC 43123 / DSM 2839 / NBRC 102507 / CH34) (Ralstonia metallidurans)).